A 90-amino-acid chain; its full sequence is Conotoxin Ca8.2 (90 aa).

The first 21 residues, 1–21 (MMLKMGAMFVLLLLFILPSSQ), serve as a signal peptide directing secretion. Residues 22 to 46 (QEGDVQARKTHLKRGFYGTLAMSTR) constitute a propeptide that is removed on maturation. Q89 is modified (glutamine amide).

It belongs to the conotoxin S superfamily. Contains 5 disulfide bonds. Expressed by the venom duct.

The protein resides in the secreted. The sequence is that of Conotoxin Ca8.2 from Conus caracteristicus (Characteristic cone).